The following is a 665-amino-acid chain: UvrABC system protein B (665 aa).

In terms of domain architecture, Helicase ATP-binding spans 31-414 (DGVKGGEKAQ…EMEQTETVVQ (384 aa)). 44–51 (GATGTGKT) is a binding site for ATP. The Beta-hairpin signature appears at 97 to 120 (YYDYYQPEAYVPSSDTYIEKDSSI). The Helicase C-terminal domain maps to 435-601 (QIDDLVGEIH…TIIKEIRDLI (167 aa)). The UVR domain occupies 629–664 (ADLLMKLEREMKDAAKALDFETAATLRDTILELKAA).

The protein belongs to the UvrB family. In terms of assembly, forms a heterotetramer with UvrA during the search for lesions. Interacts with UvrC in an incision complex.

It is found in the cytoplasm. In terms of biological role, the UvrABC repair system catalyzes the recognition and processing of DNA lesions. A damage recognition complex composed of 2 UvrA and 2 UvrB subunits scans DNA for abnormalities. Upon binding of the UvrA(2)B(2) complex to a putative damaged site, the DNA wraps around one UvrB monomer. DNA wrap is dependent on ATP binding by UvrB and probably causes local melting of the DNA helix, facilitating insertion of UvrB beta-hairpin between the DNA strands. Then UvrB probes one DNA strand for the presence of a lesion. If a lesion is found the UvrA subunits dissociate and the UvrB-DNA preincision complex is formed. This complex is subsequently bound by UvrC and the second UvrB is released. If no lesion is found, the DNA wraps around the other UvrB subunit that will check the other stand for damage. The protein is UvrABC system protein B of Enterococcus faecalis (strain ATCC 700802 / V583).